We begin with the raw amino-acid sequence, 64 residues long: Cytochrome c oxidase subunit 5C-2 (64 aa).

The helical transmembrane segment at 15-34 (SVVKELVIGTVLGLAAGGLW) threads the bilayer.

It belongs to the cytochrome c oxidase subunit 5C family.

Its subcellular location is the mitochondrion inner membrane. Its function is as follows. This protein is one of the nuclear-coded polypeptide chains of cytochrome c oxidase, the terminal oxidase in mitochondrial electron transport. The chain is Cytochrome c oxidase subunit 5C-2 (COX5C2) from Helianthus annuus (Common sunflower).